Here is a 66-residue protein sequence, read N- to C-terminus: U8-myrmicitoxin-Tb1a (66 aa).

The signal sequence occupies residues Met1–Ala26. The propeptide occupies Lys27 to Ala50.

As to expression, expressed by the venom gland.

The protein localises to the secreted. In vivo, this neurotoxin paralyzes about 50% of blowflies (L.caesar) one hour after intrathoracic injection, when tested at high doses (54 nmol/g). The sequence is that of U8-myrmicitoxin-Tb1a from Tetramorium bicarinatum (Tramp ant).